A 572-amino-acid polypeptide reads, in one-letter code: Hemagglutinin-neuraminidase (572 aa).

At 1-31 (MEYWKHTNHGKDAGNELETSMATHGNKLTNK) the chain is on the intravirion side. Residues 32-52 (IIYILWTIILVLLSIVFIIVL) traverse the membrane as a helical segment. Over 53-572 (INSIKSEKAH…FKTEIPKSCS (520 aa)) the chain is Virion surface. 2 disulfide bridges follow: Cys190/Cys214 and Cys256/Cys269. Residues 252–257 (NRKSCS) form an involved in neuraminidase activity region. Asn308 and Asn351 each carry an N-linked (GlcNAc...) asparagine; by host glycan. 2 disulfide bridges follow: Cys355–Cys469 and Cys463–Cys473. Residue Asn523 is glycosylated (N-linked (GlcNAc...) asparagine; by host). Residues Cys535 and Cys544 are joined by a disulfide bond.

The protein belongs to the paramyxoviruses hemagglutinin-neuraminidase family. As to quaternary structure, homotetramer; composed of disulfide-linked homodimers. Interacts with F protein trimer.

It localises to the virion membrane. It is found in the host cell membrane. The catalysed reaction is Hydrolysis of alpha-(2-&gt;3)-, alpha-(2-&gt;6)-, alpha-(2-&gt;8)- glycosidic linkages of terminal sialic acid residues in oligosaccharides, glycoproteins, glycolipids, colominic acid and synthetic substrates.. Its function is as follows. Attaches the virus to sialic acid-containing cell receptors and thereby initiating infection. Binding of HN protein to the receptor induces a conformational change that allows the F protein to trigger virion/cell membranes fusion. In terms of biological role, neuraminidase activity ensures the efficient spread of the virus by dissociating the mature virions from the neuraminic acid containing glycoproteins. In Homo sapiens (Human), this protein is Hemagglutinin-neuraminidase (HN).